Here is a 443-residue protein sequence, read N- to C-terminus: Tol-Pal system protein TolB (443 aa).

The first 33 residues, 1-33 (MKIGIINTKIRTVFSAFACMIAASLVCTMPARA), serve as a signal peptide directing secretion.

The protein belongs to the TolB family. The Tol-Pal system is composed of five core proteins: the inner membrane proteins TolA, TolQ and TolR, the periplasmic protein TolB and the outer membrane protein Pal. They form a network linking the inner and outer membranes and the peptidoglycan layer.

The protein resides in the periplasm. Its function is as follows. Part of the Tol-Pal system, which plays a role in outer membrane invagination during cell division and is important for maintaining outer membrane integrity. The chain is Tol-Pal system protein TolB from Brucella ovis (strain ATCC 25840 / 63/290 / NCTC 10512).